We begin with the raw amino-acid sequence, 127 residues long: Ribosome-binding factor A (127 aa).

It belongs to the RbfA family. As to quaternary structure, monomer. Binds 30S ribosomal subunits, but not 50S ribosomal subunits or 70S ribosomes.

It localises to the cytoplasm. Its function is as follows. One of several proteins that assist in the late maturation steps of the functional core of the 30S ribosomal subunit. Associates with free 30S ribosomal subunits (but not with 30S subunits that are part of 70S ribosomes or polysomes). Required for efficient processing of 16S rRNA. May interact with the 5'-terminal helix region of 16S rRNA. The protein is Ribosome-binding factor A of Rickettsia typhi (strain ATCC VR-144 / Wilmington).